Here is a 152-residue protein sequence, read N- to C-terminus: Em-like protein GEA1 (152 aa).

Basic and acidic residues-rich tracts occupy residues 1–17 (MASKQLSREELDEKAKQ) and 32–63 (EAQEHLAEGRSKGGQTRKEQLGHEGYQEIGHK). Residues 1–63 (MASKQLSREE…HEGYQEIGHK (63 aa)) form a disordered region. 4 consecutive repeat copies span residues 44 to 63 (GGQTRKEQLGHEGYQEIGHK), 64 to 83 (GGEARKEQLGHEGYQEMGHK), 84 to 103 (GGEARKEQLGHEGYQEMGHK), and 104 to 123 (GGEARKEQLGHEGYKEMGRK). Residues 44 to 123 (GGQTRKEQLG…HEGYKEMGRK (80 aa)) form a 4 X 20 AA tandem repeats region. Residues 116-152 (GYKEMGRKGGLSTMEKSGGERAEEEGIEIDESKFTNK) are disordered.

It belongs to the small hydrophilic plant seed protein family. As to expression, in seeds only. Specifically located to vascular bundles in the cotyledon and axis of the dry seed. Also found in the epiderm and outer layers of the cortex in the embryo axis.

In terms of biological role, it is thought to provide protection for the cytoplasm during the desiccation stage of embryo development. The sequence is that of Em-like protein GEA1 (EM1) from Arabidopsis thaliana (Mouse-ear cress).